Here is a 422-residue protein sequence, read N- to C-terminus: Glycine amidinotransferase, mitochondrial (422 aa).

Active-site residues include D253 and H302. C406 (amidino-cysteine intermediate) is an active-site residue.

Belongs to the amidinotransferase family. In terms of assembly, homodimer. Strongly expressed in neurons and glia of the brain, the lamina propria, submucosa and serosa of the small intestine, in oocytes and on the fringes of the pancreas. Not expressed in the retina, eye lens, heart or bulbus arteriosus. Expressed in the yolk syncytial layer in gastrula stage embryos, in the yolk syncytial layer and mature somites in early segmentation embryos and in the yolk syncytial layer and the liver of long-pec stage (48 hours post-fertilization) embryos.

It localises to the mitochondrion inner membrane. It catalyses the reaction L-arginine + glycine = guanidinoacetate + L-ornithine. It participates in amine and polyamine biosynthesis; creatine biosynthesis; creatine from L-arginine and glycine: step 1/2. Catalyzes the biosynthesis of guanidinoacetate, the immediate precursor of creatine. Creatine plays a vital role in energy metabolism in muscle tissues. May play a role in embryonic and central nervous system development. This Danio rerio (Zebrafish) protein is Glycine amidinotransferase, mitochondrial.